The primary structure comprises 152 residues: Proteolipid protein 2 (152 aa).

Positions 19–137 (FSRTRKGFLL…DAYITFPLRQ (119 aa)) constitute an MARVEL domain. Helical transmembrane passes span 25–45 (GFLL…FSTS), 48–68 (GYSF…VVYM), and 85–105 (FFRT…VLVE). An N-linked (GlcNAc...) asparagine glycan is attached at Asn-108. The chain crosses the membrane as a helical span at residues 112 to 132 (IAAGALGLCAAGLFGYDAYIT).

The protein resides in the membrane. May play a role in cell differentiation in the intestinal epithelium. The polypeptide is Proteolipid protein 2 (PLP2) (Bos taurus (Bovine)).